A 400-amino-acid polypeptide reads, in one-letter code: Casein kinase I homolog hhp2 (400 aa).

The region spanning 12–278 (YRIGRKIGSG…YLRKLFRDLL (267 aa)) is the Protein kinase domain. ATP is bound by residues 18–26 (IGSGSFGQI) and Lys-41. The Proton acceptor role is filled by Asp-131. Residues 330 to 352 (PNYSSIPLPAERNPKTPQSFSTN) are disordered.

This sequence belongs to the protein kinase superfamily. CK1 Ser/Thr protein kinase family. Casein kinase I subfamily.

It is found in the nucleus. The enzyme catalyses L-seryl-[protein] + ATP = O-phospho-L-seryl-[protein] + ADP + H(+). It catalyses the reaction L-threonyl-[protein] + ATP = O-phospho-L-threonyl-[protein] + ADP + H(+). Functionally, involved in DNA repair. May regulate the activity of protein(s) involved in double strand break repair caused by gamma rays. The polypeptide is Casein kinase I homolog hhp2 (hhp2) (Schizosaccharomyces pombe (strain 972 / ATCC 24843) (Fission yeast)).